Reading from the N-terminus, the 358-residue chain is Heme A synthase (358 aa).

8 consecutive transmembrane segments (helical) span residues 25–45 (LVRYWLYAVFAVLIAIVMVGG), 111–131 (LLARFVGFLVAVPLGFFWLTG), 141–161 (MLGLLALGGLQGAIGWWMVAS), 176–196 (IHLTTACVIITAVFYIARGLV), 210–230 (FAGWIVFAVLVQIYLGGLVAG), 269–289 (VQFVHRMFAYTVLLLAILHAV), 304–324 (TIVLVGLVFIQAMIGIATLLM), and 326–346 (APLHLGLTHQFFALVVLAFAV). A heme-binding site is contributed by histidine 273. Residue histidine 334 participates in heme binding.

Belongs to the COX15/CtaA family. Type 2 subfamily. In terms of assembly, interacts with CtaB. Heme b serves as cofactor.

It is found in the cell membrane. It catalyses the reaction Fe(II)-heme o + 2 A + H2O = Fe(II)-heme a + 2 AH2. It participates in porphyrin-containing compound metabolism; heme A biosynthesis; heme A from heme O: step 1/1. In terms of biological role, catalyzes the conversion of heme O to heme A by two successive hydroxylations of the methyl group at C8. The first hydroxylation forms heme I, the second hydroxylation results in an unstable dihydroxymethyl group, which spontaneously dehydrates, resulting in the formyl group of heme A. This is Heme A synthase from Brucella abortus (strain S19).